We begin with the raw amino-acid sequence, 225 residues long: Ribonuclease HII (225 aa).

One can recognise an RNase H type-2 domain in the interval 2 to 210; sequence GIVVGVDEAG…VRKLGGPWRS (209 aa). 3 residues coordinate a divalent metal cation: D8, E9, and D107.

The protein belongs to the RNase HII family. It depends on Mn(2+) as a cofactor. The cofactor is Mg(2+).

The protein localises to the cytoplasm. The catalysed reaction is Endonucleolytic cleavage to 5'-phosphomonoester.. Its function is as follows. Endonuclease that specifically degrades the RNA of RNA-DNA hybrids. The sequence is that of Ribonuclease HII (rnhB) from Aeropyrum pernix (strain ATCC 700893 / DSM 11879 / JCM 9820 / NBRC 100138 / K1).